A 247-amino-acid polypeptide reads, in one-letter code: Neurotrophic factor BDNF precursor form (247 aa).

The N-terminal stretch at 1–18 (MTILFLTMVISYFGCMKA) is a signal peptide. A propeptide spanning residues 19 to 128 (APMKEANARG…AANMSMRVRR (110 aa)) is cleaved from the precursor. N-linked (GlcNAc...) asparagine glycosylation is present at asparagine 121. Cystine bridges form between cysteine 141/cysteine 208, cysteine 186/cysteine 237, and cysteine 196/cysteine 239.

The protein belongs to the NGF-beta family. In terms of assembly, monomers and homodimers. Binds to NTRK2/TRKB. Can form heterodimers with other neurotrophin family members, such as NTF3 and NTF4 (in vitro), but the physiological relevance of this is not clear. BDNF precursor form: interacts with the heterodimer formed by NGFR and SORCS2. Mature BDNF has much lower affinity for the heterodimer formed by NGFR and SORCS2. In terms of processing, N-glycosylated and glycosulfated, contrary to mature BDNF. Mature BDNF is produced by proteolytic removal of the propeptide, catalyzed by a FURIN family member. In addition, the precursor form is proteolytically cleaved within the propeptide, but this is not an obligatory intermediate for the production of mature BDNF. Can be converted into mature BDNF by plasmin (PLG).

The protein localises to the secreted. Its function is as follows. Important signaling molecule that activates signaling cascades downstream of NTRK2. During development, promotes the survival and differentiation of selected neuronal populations of the peripheral and central nervous systems. Participates in axonal growth, pathfinding and in the modulation of dendritic growth and morphology. Major regulator of synaptic transmission and plasticity at adult synapses in many regions of the CNS. The versatility of BDNF is emphasized by its contribution to a range of adaptive neuronal responses including long-term potentiation (LTP), long-term depression (LTD), certain forms of short-term synaptic plasticity, as well as homeostatic regulation of intrinsic neuronal excitability. Important signaling molecule that activates signaling cascades downstream of NTRK2. Activates signaling cascades via the heterodimeric receptor formed by NGFR and SORCS2. Signaling via NGFR and SORCS2 plays a role in synaptic plasticity and long-term depression (LTD). Binding to NGFR and SORCS2 promotes neuronal apoptosis. Promotes neuronal growth cone collapse. In Equus caballus (Horse), this protein is Neurotrophic factor BDNF precursor form (BDNF).